The sequence spans 260 residues: Uroplakin-1b (260 aa).

At 1-15 (MAKDDSTVRCFQGLL) the chain is on the cytoplasmic side. A helical transmembrane segment spans residues 16–36 (IFGHVIVGMCGIALTAECIFF). The Extracellular segment spans residues 37–59 (VSDQHSLYPLLEATNNDDIFGAA). A helical membrane pass occupies residues 60–80 (WIGMFVGICLFCLSVLAIVGI). Topologically, residues 81–86 (MKSNRK) are cytoplasmic. Residues 87-107 (ILLAYFIMMFIVYGFEVASCI) traverse the membrane as a helical segment. Topologically, residues 108 to 229 (TAATQRDFFT…ELISGPMDRH (122 aa)) are extracellular. A helical transmembrane segment spans residues 230-250 (AWGVAWFGFAILCWTFWVLLG). Residues 251–260 (TMFYWSRIEY) lie on the Cytoplasmic side of the membrane.

The protein belongs to the tetraspanin (TM4SF) family. As to quaternary structure, heterodimer with uroplakin-3A (UPK3A) or uroplakin-3B (UPK3B). Post-translationally, N-glycosylated with high-mannose oligosaccharides. In terms of tissue distribution, bladder epithelium.

The protein localises to the membrane. Its function is as follows. Component of the asymmetric unit membrane (AUM); a highly specialized biomembrane elaborated by terminally differentiated urothelial cells. May play an important role in normal bladder epithelial physiology, possibly in regulating membrane permeability of superficial umbrella cells or in stabilizing the apical membrane through AUM/cytoskeletal interactions. This Mus musculus (Mouse) protein is Uroplakin-1b (Upk1b).